The sequence spans 149 residues: Glycine cleavage system H protein (149 aa).

A Lipoyl-binding domain is found at 23-104 (LIWVGISNHA…PYGIWLFKIN (82 aa)). The residue at position 64 (K64) is an N6-lipoyllysine.

This sequence belongs to the GcvH family. In terms of assembly, the glycine cleavage system is composed of four proteins: P, T, L and H. (R)-lipoate serves as cofactor.

Functionally, the glycine cleavage system catalyzes the degradation of glycine. The H protein shuttles the methylamine group of glycine from the P protein to the T protein. In Polynucleobacter necessarius subsp. necessarius (strain STIR1), this protein is Glycine cleavage system H protein.